Here is a 262-residue protein sequence, read N- to C-terminus: Cap-specific mRNA (nucleoside-2'-O-)-methyltransferase (262 aa).

In terms of domain architecture, RrmJ-type SAM-dependent 2'-O-MTase spans 34-226; it reads TRRPRCWRKL…ERYLICFNKL (193 aa). Residues Gly67 and Asp140 each contribute to the S-adenosyl-L-methionine site. The active-site Proton acceptor is Lys180.

It carries out the reaction a 5'-end (N(7)-methyl 5'-triphosphoguanosine)-ribonucleoside in mRNA + S-adenosyl-L-methionine = a 5'-end (N(7)-methyl 5'-triphosphoguanosine)-(2'-O-methyl-ribonucleoside) in mRNA + S-adenosyl-L-homocysteine + H(+). In terms of biological role, S-adenosyl-L-methionine-dependent methyltransferase that mediates mRNA cap 2'-O-ribose methylation to the 5'-cap structure of late viral transcripts. The polypeptide is Cap-specific mRNA (nucleoside-2'-O-)-methyltransferase (Lepidoptera (butterflies and moths)).